Reading from the N-terminus, the 365-residue chain is Probable dual-specificity RNA methyltransferase RlmN (365 aa).

The active-site Proton acceptor is the glutamate 106. A Radical SAM core domain is found at 112–352 (YPDRVTLCVS…VTVRDTRGRE (241 aa)). Cysteine 119 and cysteine 357 are joined by a disulfide. Residues cysteine 126, cysteine 130, and cysteine 133 each contribute to the [4Fe-4S] cluster site. Residues 181 to 182 (GE), serine 215, 238 to 240 (SLH), and asparagine 314 each bind S-adenosyl-L-methionine. Cysteine 357 functions as the S-methylcysteine intermediate in the catalytic mechanism.

The protein belongs to the radical SAM superfamily. RlmN family. Requires [4Fe-4S] cluster as cofactor.

The protein localises to the cytoplasm. It catalyses the reaction adenosine(2503) in 23S rRNA + 2 reduced [2Fe-2S]-[ferredoxin] + 2 S-adenosyl-L-methionine = 2-methyladenosine(2503) in 23S rRNA + 5'-deoxyadenosine + L-methionine + 2 oxidized [2Fe-2S]-[ferredoxin] + S-adenosyl-L-homocysteine. The catalysed reaction is adenosine(37) in tRNA + 2 reduced [2Fe-2S]-[ferredoxin] + 2 S-adenosyl-L-methionine = 2-methyladenosine(37) in tRNA + 5'-deoxyadenosine + L-methionine + 2 oxidized [2Fe-2S]-[ferredoxin] + S-adenosyl-L-homocysteine. In terms of biological role, specifically methylates position 2 of adenine 2503 in 23S rRNA and position 2 of adenine 37 in tRNAs. The protein is Probable dual-specificity RNA methyltransferase RlmN of Thermobifida fusca (strain YX).